Here is a 1171-residue protein sequence, read N- to C-terminus: ATP-dependent helicase/deoxyribonuclease subunit B (1171 aa).

The region spanning 1–390 (MSLRFVIGRA…HPLVECIRSA (390 aa)) is the UvrD-like helicase ATP-binding domain. 8–15 (GRAGSGKS) contacts ATP. In terms of domain architecture, UvrD-like helicase C-terminal spans 281–587 (MEQPRFHSPA…QFANIPPSLD (307 aa)). [4Fe-4S] cluster contacts are provided by Cys-805, Cys-1129, Cys-1132, and Cys-1138.

Belongs to the helicase family. AddB/RexB type 1 subfamily. As to quaternary structure, heterodimer of AddA and AddB. It depends on Mg(2+) as a cofactor. Requires [4Fe-4S] cluster as cofactor.

Its function is as follows. The heterodimer acts as both an ATP-dependent DNA helicase and an ATP-dependent, dual-direction single-stranded exonuclease. Recognizes the chi site generating a DNA molecule suitable for the initiation of homologous recombination. The AddB subunit has 5' -&gt; 3' nuclease activity but not helicase activity. This is ATP-dependent helicase/deoxyribonuclease subunit B from Bacillus cereus (strain ATCC 10987 / NRS 248).